Here is a 393-residue protein sequence, read N- to C-terminus: S-adenosylmethionine synthase 3 (393 aa).

Residue E9 participates in Mg(2+) binding. Residue H15 participates in ATP binding. A K(+)-binding site is contributed by E43. L-methionine-binding residues include E56 and Q99. ATP-binding positions include 167-169 (DGK), 235-238 (SGRF), D246, 252-253 (RK), A269, K273, and K277. D246 is a binding site for L-methionine. L-methionine is bound at residue K277.

Belongs to the AdoMet synthase family. Homotetramer. It depends on Mn(2+) as a cofactor. Requires Mg(2+) as cofactor. Co(2+) serves as cofactor. K(+) is required as a cofactor.

It is found in the cytoplasm. The enzyme catalyses L-methionine + ATP + H2O = S-adenosyl-L-methionine + phosphate + diphosphate. Its pathway is amino-acid biosynthesis; S-adenosyl-L-methionine biosynthesis; S-adenosyl-L-methionine from L-methionine: step 1/1. Functionally, catalyzes the formation of S-adenosylmethionine from methionine and ATP. The reaction comprises two steps that are both catalyzed by the same enzyme: formation of S-adenosylmethionine (AdoMet) and triphosphate, and subsequent hydrolysis of the triphosphate. In Petunia hybrida (Petunia), this protein is S-adenosylmethionine synthase 3 (SAM3).